Consider the following 875-residue polypeptide: Serine/threonine-protein kinase ATG1 (875 aa).

The Protein kinase domain occupies 22 to 318; the sequence is YSIGPEIGKG…FNEFFNDPLI (297 aa). ATP is bound by residues 28–36 and Lys51; that span reads IGKGSFATV. The Proton acceptor role is filled by Asp168. Positions 367–379 are enriched in basic and acidic residues; sequence EKSKQDLPAREVS. Disordered stretches follow at residues 367–422 and 470–515; these read EKSK…QPHN and INPR…DRRI. Over residues 380–389 the composition is skewed to polar residues; the sequence is THASESQTKA. The segment covering 390–405 has biased composition (basic and acidic residues); the sequence is VDTRPSSRDEEIKEII. Polar residues-rich tracts occupy residues 406–420, 473–490, and 497–508; these read NKNSPGPETSRSIQP, RRTSSGSDNSYNGPNNMQ, and LRSNSSGSQRRP.

The protein belongs to the protein kinase superfamily. Ser/Thr protein kinase family. APG1/unc-51/ULK1 subfamily. As to quaternary structure, homodimer. Forms a ternary complex with ATG13 and ATG17.

It is found in the cytoplasm. The protein resides in the preautophagosomal structure membrane. The catalysed reaction is L-seryl-[protein] + ATP = O-phospho-L-seryl-[protein] + ADP + H(+). It catalyses the reaction L-threonyl-[protein] + ATP = O-phospho-L-threonyl-[protein] + ADP + H(+). Functionally, serine/threonine protein kinase involved in the cytoplasm to vacuole transport (Cvt) and found to be essential in autophagy, where it is required for the formation of autophagosomes. Involved in the clearance of protein aggregates which cannot be efficiently cleared by the proteasome. Required for selective autophagic degradation of the nucleus (nucleophagy) as well as for mitophagy which contributes to regulate mitochondrial quantity and quality by eliminating the mitochondria to a basal level to fulfill cellular energy requirements and preventing excess ROS production. Also involved in endoplasmic reticulum-specific autophagic process, in selective removal of ER-associated degradation (ERAD) substrates. Plays a key role in ATG9 and ATG23 cycling through the pre-autophagosomal structure and is necessary to promote ATG18 binding to ATG9 through phosphorylation of ATG9. Catalyzes phosphorylation of ATG4, decreasing the interaction between ATG4 and ATG8 and impairing deconjugation of PE-conjugated forms of ATG8. This is Serine/threonine-protein kinase ATG1 from Debaryomyces hansenii (strain ATCC 36239 / CBS 767 / BCRC 21394 / JCM 1990 / NBRC 0083 / IGC 2968) (Yeast).